Consider the following 210-residue polypeptide: Amelogenin, X isoform (210 aa).

The N-terminal stretch at 1–16 (MGTWILFACLLGAAFA) is a signal peptide. S32 is modified (phosphoserine). Low complexity-rich tracts occupy residues 109–119 (VAPQQPMMPVP) and 136–169 (PSAQ…HPMQ). The disordered stretch occupies residues 109–187 (VAPQQPMMPV…PPLFSMQPLS (79 aa)). The segment covering 170 to 179 (PLAPQPPLPP) has biased composition (pro residues).

The protein belongs to the amelogenin family. As to quaternary structure, interacts with KRT5. In terms of processing, several forms are produced by C-terminal processing. Post-translationally, phosphorylated by FAM20C in vitro.

The protein localises to the secreted. Its subcellular location is the extracellular space. It localises to the extracellular matrix. In terms of biological role, plays a role in the biomineralization of teeth. Seems to regulate the formation of crystallites during the secretory stage of tooth enamel development. Thought to play a major role in the structural organization and mineralization of developing enamel. The sequence is that of Amelogenin, X isoform (Amelx) from Mus musculus (Mouse).